The primary structure comprises 197 residues: Imidazoleglycerol-phosphate dehydratase (197 aa).

This sequence belongs to the imidazoleglycerol-phosphate dehydratase family.

It is found in the cytoplasm. The catalysed reaction is D-erythro-1-(imidazol-4-yl)glycerol 3-phosphate = 3-(imidazol-4-yl)-2-oxopropyl phosphate + H2O. It functions in the pathway amino-acid biosynthesis; L-histidine biosynthesis; L-histidine from 5-phospho-alpha-D-ribose 1-diphosphate: step 6/9. The polypeptide is Imidazoleglycerol-phosphate dehydratase (Stutzerimonas stutzeri (strain A1501) (Pseudomonas stutzeri)).